Consider the following 329-residue polypeptide: MSFDPLPGTLENLLEQTSLKWIFVGGKGGVGKTTTSCSLAIQMSKVRSSVLLISTDPAHNLSDAFGTKFGKDARKVPGFDNLSAMEIDPNLSIQEMTEQADQQNPNNPLSGMMQDLAFTIPGIDEALAFAEILKQIKSMEFDCVIFDTAPTGHTLRFLNFPTVLEKALGKLGGLSSRFGPMINQMGSIMGVNANEQDLFGKMESMRANISEVNKQFKNPDLTTFVCVCISEFLSLYETERMIQELTSYEIDTHNIVVNQLLLDPNTTCPQCMARRKMQQKYLAQIEELYEDFHVVKVPQVPAEVRGTEALKSFSEMLVKPYVYPTSGKE.

Lysine 27–threonine 34 contributes to the ATP binding site. Aspartate 56 is a catalytic residue. 2 residues coordinate ATP: glutamate 231 and asparagine 258. Residues cysteine 268 and cysteine 271 each contribute to the Zn(2+) site.

The protein belongs to the arsA ATPase family. As to quaternary structure, homodimer.

It is found in the cytoplasm. The protein resides in the endoplasmic reticulum. Its subcellular location is the nucleus. In terms of biological role, ATPase required for the post-translational delivery of tail-anchored (TA) proteins to the endoplasmic reticulum. Recognizes and selectively binds the transmembrane domain of TA proteins in the cytosol. This complex then targets to the endoplasmic reticulum by membrane-bound receptors, where the tail-anchored protein is released for insertion. This process is regulated by ATP binding and hydrolysis. ATP binding drives the homodimer towards the closed dimer state, facilitating recognition of newly synthesized TA membrane proteins. ATP hydrolysis is required for insertion. Subsequently, the homodimer reverts towards the open dimer state, lowering its affinity for the membrane-bound receptor, and returning it to the cytosol to initiate a new round of targeting. This Schizosaccharomyces pombe (strain 972 / ATCC 24843) (Fission yeast) protein is ATPase get3 (get3).